Here is a 361-residue protein sequence, read N- to C-terminus: Peptide chain release factor 1 (361 aa).

Gln-236 is modified (N5-methylglutamine).

Belongs to the prokaryotic/mitochondrial release factor family. Methylated by PrmC. Methylation increases the termination efficiency of RF1.

Its subcellular location is the cytoplasm. Functionally, peptide chain release factor 1 directs the termination of translation in response to the peptide chain termination codons UAG and UAA. The protein is Peptide chain release factor 1 of Lactobacillus acidophilus (strain ATCC 700396 / NCK56 / N2 / NCFM).